The chain runs to 40 residues: Competence and sporulation stimulating factor (40 aa).

Positions 1-35 are excised as a propeptide; that stretch reads MKLKSKLFVICLAAAAIFTAAGVSANAEALDFHVT.

It belongs to the Phr family. As to quaternary structure, interacts with RapC and inhibits its interaction with ComA. Secreted with a propeptide domain, which is cleaved in the cell wall by the secreted serine proteases subtilisin, Epr and Vpr to produce a mature signaling peptide. Contains a predicted signal peptide cleavage site in the N-terminal region, however the propeptide is probably subject to only one processing event, at the N-terminal end of the mature peptide.

Its subcellular location is the secreted. It is found in the cytoplasm. It localises to the host cell. In terms of biological role, signaling molecule that serves as a cell density signal for both genetic competence development and sporulation. Secreted during production, but the mature peptide acts intracellularly, indicating that it needs to be imported into the cell to function. At low concentrations, CSF stimulates expression of the genes controlled by ComA, a transcriptional factor that regulates the development of genetic competence. It includes the srfA operon, which encodes a small protein, ComS, required for competence development, and the surfactin biosynthetic enzymes. Acts by inhibiting RapC, which regulates the activity of ComA. At high concentrations, it inhibits expression of those same ComA-controlled genes, maybe by inhibiting activity of the kinase ComP. In addition, high concentrations of CSF can stimulate sporulation under some conditions. Also inhibits RapB activity, with lower efficiency, but does not act on RapA. Is probably involved in the quorum sensing control of sporulation. CSF is a species-specific signaling molecule that partially compensates for the lack of ComX-mediated communication between different strains of B.subtilis. B.subtilis is a well-characterized soil and water saprophyte, but it is also found in enteric flora of many species, including humans. In this environment, CSF can be transported into human intestinal epithelia via OCTN2, a host cell membrane transporter, and can induce cytoprotective heat shock proteins contributing to intestinal homeostasis. Its function is as follows. In addition, in non-domesticated swarming strains of B.subtilis, the residual propeptide exposed on the exterior of the cytoplasmic membrane may have an extracellular role in swarming. This function is probably not dependent on CSF. The protein is Competence and sporulation stimulating factor of Bacillus subtilis (strain 168).